The primary structure comprises 350 residues: uncharacterized protein (350 aa).

Residues 164–327 enclose the Integrase catalytic domain; that stretch reads NDPLPGYVEV…EKTRIGARVV (164 aa).

This is an uncharacterized protein from Sinorhizobium fredii (strain NBRC 101917 / NGR234).